A 777-amino-acid chain; its full sequence is Phosphoribosylformylglycinamidine synthase subunit PurL (777 aa).

His-50 is a catalytic residue. ATP is bound by residues Tyr-53 and Lys-92. Residue Glu-94 participates in Mg(2+) binding. Substrate is bound by residues 95–98 (SHNH) and Arg-117. Residue His-96 is the Proton acceptor of the active site. Asp-118 lines the Mg(2+) pocket. Position 241 (Gln-241) interacts with substrate. Residue Asp-269 coordinates Mg(2+). Residue 313 to 315 (ESQ) coordinates substrate. The ATP site is built by Asp-520 and Gly-557. Asn-558 lines the Mg(2+) pocket. Residue Ser-560 coordinates substrate.

This sequence belongs to the FGAMS family. Monomer. Part of the FGAM synthase complex composed of 1 PurL, 1 PurQ and 2 PurS subunits.

The protein localises to the cytoplasm. The catalysed reaction is N(2)-formyl-N(1)-(5-phospho-beta-D-ribosyl)glycinamide + L-glutamine + ATP + H2O = 2-formamido-N(1)-(5-O-phospho-beta-D-ribosyl)acetamidine + L-glutamate + ADP + phosphate + H(+). It participates in purine metabolism; IMP biosynthesis via de novo pathway; 5-amino-1-(5-phospho-D-ribosyl)imidazole from N(2)-formyl-N(1)-(5-phospho-D-ribosyl)glycinamide: step 1/2. Part of the phosphoribosylformylglycinamidine synthase complex involved in the purines biosynthetic pathway. Catalyzes the ATP-dependent conversion of formylglycinamide ribonucleotide (FGAR) and glutamine to yield formylglycinamidine ribonucleotide (FGAM) and glutamate. The FGAM synthase complex is composed of three subunits. PurQ produces an ammonia molecule by converting glutamine to glutamate. PurL transfers the ammonia molecule to FGAR to form FGAM in an ATP-dependent manner. PurS interacts with PurQ and PurL and is thought to assist in the transfer of the ammonia molecule from PurQ to PurL. This chain is Phosphoribosylformylglycinamidine synthase subunit PurL, found in Trichormus variabilis (strain ATCC 29413 / PCC 7937) (Anabaena variabilis).